A 264-amino-acid chain; its full sequence is Exosome complex component Rrp4 (264 aa).

In terms of domain architecture, S1 motif spans 65–137 (GDNVLGKIVD…EVNNIELTTK (73 aa)). The 60-residue stretch at 147-206 (RGGQIIKITSSKVPRVIGKGGSMINMIKKLTQSRIIVGQNGWIWISSKNPELEKLAIEAI) folds into the KH domain. Over residues 244 to 258 (SLEEETQEETVMEND) the composition is skewed to acidic residues. A disordered region spans residues 244–264 (SLEEETQEETVMENDVEARGP).

This sequence belongs to the RRP4 family. Component of the archaeal exosome complex. Forms a trimer of Rrp4 and/or Csl4 subunits. The trimer associates with a hexameric ring-like arrangement composed of 3 Rrp41-Rrp42 heterodimers.

It is found in the cytoplasm. Functionally, non-catalytic component of the exosome, which is a complex involved in RNA degradation. Increases the RNA binding and the efficiency of RNA degradation. Confers strong poly(A) specificity to the exosome. This chain is Exosome complex component Rrp4, found in Pyrococcus furiosus (strain ATCC 43587 / DSM 3638 / JCM 8422 / Vc1).